The chain runs to 168 residues: uncharacterized protein (168 aa).

Positions 1 to 52 (MVLGLASFPESLSSQSETATQPRRPSVKWDLGSDYRKGTEETTASGSNFRRE) are disordered. Residues 10–23 (ESLSSQSETATQPR) show a composition bias toward polar residues. The segment covering 31-40 (LGSDYRKGTE) has biased composition (basic and acidic residues).

This is an uncharacterized protein from Mus musculus (Mouse).